The sequence spans 535 residues: Pre-mRNA-splicing factor SLU7-A (535 aa).

The segment at Glu21–Ile44 is disordered. The CCHC-type zinc finger occupies Cys96–Cys109. The segment covering Leu176 to Asp190 has biased composition (basic and acidic residues). Disordered regions lie at residues Leu176 to Val204 and Glu489 to Tyr508. The segment covering Ala191–Arg203 has biased composition (acidic residues). Residue Ser193 is modified to Phosphoserine. Residues Leu486–Arg493 carry the Nuclear localization signal motif. Residues Glu489–Lys501 show a composition bias toward basic and acidic residues.

The protein belongs to the SLU7 family. Mainly expressed in tissues undergoing cell proliferation, particularly in lateral organs.

Its subcellular location is the nucleus. Participates in the second catalytic step of pre-mRNA splicing, when the free hydroxyl group of exon I attacks the 3'-splice site to generate spliced mRNA and the excised lariat intron. Together with SMP2, involved in the timing of cell cycle arrest during leaf development, in a STRUWWELPETER (SWP) dependent manner; promotes cell proliferation in developing organs. The sequence is that of Pre-mRNA-splicing factor SLU7-A from Arabidopsis thaliana (Mouse-ear cress).